We begin with the raw amino-acid sequence, 209 residues long: Imidazole glycerol phosphate synthase subunit HisH (209 aa).

Residues 3-209 (SVAVIDYGMG…ANFLTWNGVS (207 aa)) form the Glutamine amidotransferase type-1 domain. C82 acts as the Nucleophile in catalysis. Residues H187 and E189 contribute to the active site.

In terms of assembly, heterodimer of HisH and HisF.

It localises to the cytoplasm. It catalyses the reaction 5-[(5-phospho-1-deoxy-D-ribulos-1-ylimino)methylamino]-1-(5-phospho-beta-D-ribosyl)imidazole-4-carboxamide + L-glutamine = D-erythro-1-(imidazol-4-yl)glycerol 3-phosphate + 5-amino-1-(5-phospho-beta-D-ribosyl)imidazole-4-carboxamide + L-glutamate + H(+). It carries out the reaction L-glutamine + H2O = L-glutamate + NH4(+). Its pathway is amino-acid biosynthesis; L-histidine biosynthesis; L-histidine from 5-phospho-alpha-D-ribose 1-diphosphate: step 5/9. Its function is as follows. IGPS catalyzes the conversion of PRFAR and glutamine to IGP, AICAR and glutamate. The HisH subunit catalyzes the hydrolysis of glutamine to glutamate and ammonia as part of the synthesis of IGP and AICAR. The resulting ammonia molecule is channeled to the active site of HisF. The sequence is that of Imidazole glycerol phosphate synthase subunit HisH from Nitrosococcus oceani (strain ATCC 19707 / BCRC 17464 / JCM 30415 / NCIMB 11848 / C-107).